Reading from the N-terminus, the 311-residue chain is LOB domain-containing protein 10 (311 aa).

In terms of domain architecture, LOB spans 4-105 (TPCAACKLLR…QDLLTAKEEL (102 aa)). The span at 264 to 277 (LQEGQEQTEEGQFL) shows a compositional bias: low complexity. A disordered region spans residues 264 to 311 (LQEGQEQTEEGQFLMQPMGQENLHDEEEEEELEPPVKWRMSENKEASF). Residues 287 to 296 (HDEEEEEELE) show a composition bias toward acidic residues. The span at 297–311 (PPVKWRMSENKEASF) shows a compositional bias: basic and acidic residues.

Belongs to the LOB domain-containing protein family.

This is LOB domain-containing protein 10 (LBD10) from Arabidopsis thaliana (Mouse-ear cress).